The sequence spans 101 residues: Putative regulatory protein PrgT (101 aa).

Its function is as follows. Might be involved in the expression of prgA, but is not required for activation of the expression of prgB. This chain is Putative regulatory protein PrgT (prgT), found in Enterococcus faecalis (strain ATCC 47077 / OG1RF).